The sequence spans 204 residues: UPF0637 protein SA0957 (204 aa).

This sequence belongs to the UPF0637 family.

The chain is UPF0637 protein SA0957 from Staphylococcus aureus (strain N315).